An 84-amino-acid chain; its full sequence is MAKTKAGGSTKNGRDSAGRRLGQKIGDGQFALTGSIIYRQRGTRIYPGKNVGIGNDDSLFALVDGIVKFQKIRKRKYATVVMAK.

Positions 1–22 (MAKTKAGGSTKNGRDSAGRRLG) are disordered.

It belongs to the bacterial ribosomal protein bL27 family.

The chain is Large ribosomal subunit protein bL27 from Mesomycoplasma hyopneumoniae (strain 232) (Mycoplasma hyopneumoniae).